A 550-amino-acid chain; its full sequence is Chaperonin GroEL (550 aa).

Residues 30–33, Lys-51, 87–91, Gly-415, and Asp-495 contribute to the ATP site; these read TLGP and DGTTT.

The protein belongs to the chaperonin (HSP60) family. Forms a cylinder of 14 subunits composed of two heptameric rings stacked back-to-back. Interacts with the co-chaperonin GroES.

It is found in the cytoplasm. The catalysed reaction is ATP + H2O + a folded polypeptide = ADP + phosphate + an unfolded polypeptide.. Functionally, together with its co-chaperonin GroES, plays an essential role in assisting protein folding. The GroEL-GroES system forms a nano-cage that allows encapsulation of the non-native substrate proteins and provides a physical environment optimized to promote and accelerate protein folding. The sequence is that of Chaperonin GroEL from Shewanella piezotolerans (strain WP3 / JCM 13877).